The primary structure comprises 161 residues: ATP synthase subunit b 2 (161 aa).

The chain crosses the membrane as a helical span at residues 13-33 (IVWLVIALVAMYFVMSRLAIP).

The protein belongs to the ATPase B chain family. F-type ATPases have 2 components, F(1) - the catalytic core - and F(0) - the membrane proton channel. F(1) has five subunits: alpha(3), beta(3), gamma(1), delta(1), epsilon(1). F(0) has three main subunits: a(1), b(2) and c(10-14). The alpha and beta chains form an alternating ring which encloses part of the gamma chain. F(1) is attached to F(0) by a central stalk formed by the gamma and epsilon chains, while a peripheral stalk is formed by the delta and b chains.

The protein resides in the cell inner membrane. F(1)F(0) ATP synthase produces ATP from ADP in the presence of a proton or sodium gradient. F-type ATPases consist of two structural domains, F(1) containing the extramembraneous catalytic core and F(0) containing the membrane proton channel, linked together by a central stalk and a peripheral stalk. During catalysis, ATP synthesis in the catalytic domain of F(1) is coupled via a rotary mechanism of the central stalk subunits to proton translocation. Functionally, component of the F(0) channel, it forms part of the peripheral stalk, linking F(1) to F(0). The b'-subunit is a diverged and duplicated form of b found in plants and photosynthetic bacteria. In Rhodospirillum rubrum (strain ATCC 11170 / ATH 1.1.1 / DSM 467 / LMG 4362 / NCIMB 8255 / S1), this protein is ATP synthase subunit b 2 (atpF2).